Here is a 247-residue protein sequence, read N- to C-terminus: Aliphatic sulfonates import ATP-binding protein SsuB 3 (247 aa).

The ABC transporter domain occupies 13 to 227; that stretch reads VRVRGAGRAF…SVVDPEFSAL (215 aa). An ATP-binding site is contributed by 45 to 52; the sequence is GASGSGKS.

Belongs to the ABC transporter superfamily. Aliphatic sulfonates importer (TC 3.A.1.17.2) family. The complex is composed of two ATP-binding proteins (SsuB), two transmembrane proteins (SsuC) and a solute-binding protein (SsuA).

The protein localises to the cell membrane. The enzyme catalyses ATP + H2O + aliphatic sulfonate-[sulfonate-binding protein]Side 1 = ADP + phosphate + aliphatic sulfonateSide 2 + [sulfonate-binding protein]Side 1.. Part of the ABC transporter complex SsuABC involved in aliphatic sulfonates import. Responsible for energy coupling to the transport system. The chain is Aliphatic sulfonates import ATP-binding protein SsuB 3 from Nocardia farcinica (strain IFM 10152).